The sequence spans 195 residues: ATP-dependent Clp protease proteolytic subunit (195 aa).

The active-site Nucleophile is Ser-94. His-119 is a catalytic residue.

The protein belongs to the peptidase S14 family. Component of the chloroplastic Clp protease core complex.

Its subcellular location is the plastid. It is found in the chloroplast stroma. The enzyme catalyses Hydrolysis of proteins to small peptides in the presence of ATP and magnesium. alpha-casein is the usual test substrate. In the absence of ATP, only oligopeptides shorter than five residues are hydrolyzed (such as succinyl-Leu-Tyr-|-NHMec, and Leu-Tyr-Leu-|-Tyr-Trp, in which cleavage of the -Tyr-|-Leu- and -Tyr-|-Trp bonds also occurs).. In terms of biological role, cleaves peptides in various proteins in a process that requires ATP hydrolysis. Has a chymotrypsin-like activity. Plays a major role in the degradation of misfolded proteins. This Cycas taitungensis (Prince sago) protein is ATP-dependent Clp protease proteolytic subunit.